A 229-amino-acid chain; its full sequence is Urease accessory protein UreF (229 aa).

It belongs to the UreF family. As to quaternary structure, ureD, UreF and UreG form a complex that acts as a GTP-hydrolysis-dependent molecular chaperone, activating the urease apoprotein by helping to assemble the nickel containing metallocenter of UreC. The UreE protein probably delivers the nickel.

It is found in the cytoplasm. Its function is as follows. Required for maturation of urease via the functional incorporation of the urease nickel metallocenter. This is Urease accessory protein UreF from Nostoc sp. (strain PCC 7120 / SAG 25.82 / UTEX 2576).